Consider the following 316-residue polypeptide: Cuticle collagen 7 (316 aa).

The first 34 residues, 1-34 (MSSATFLSVMAGLSGIVVFGALISVFHIYSDINS), serve as a signal peptide directing secretion. Disordered regions lie at residues 78–269 (KQSQ…DAAY) and 281–316 (HRNV…HVQA). Residues 79 to 90 (QSQCNCGQQASN) show a composition bias toward polar residues. 3 triple-helical region regions span residues 94–126 (GPPG…AGPS), 139–198 (GLPG…PGKS), and 204–263 (GLPG…DGTP). Composition is skewed to low complexity over residues 110–125 (QPGQ…VAGP), 137–147 (PQGLPGPAGVP), and 177–198 (AGSA…PGKS). A compositionally biased stretch (pro residues) spans 209-221 (SGAPGPQGPPGAP). Positions 241–260 (PNGQPGHPGQDGQPGAPGND) are enriched in low complexity.

The protein belongs to the cuticular collagen family. Collagen polypeptide chains are complexed within the cuticle by disulfide bonds and other types of covalent cross-links.

In terms of biological role, nematode cuticles are composed largely of collagen-like proteins. The cuticle functions both as an exoskeleton and as a barrier to protect the worm from its environment. This chain is Cuticle collagen 7 (col-7), found in Caenorhabditis elegans.